The following is a 418-amino-acid chain: Actin-related protein 3 (418 aa).

At Ala-2 the chain carries N-acetylalanine. Residues Lys-240, Lys-244, Lys-251, and Lys-254 each carry the N6-acetyllysine modification.

It belongs to the actin family. ARP3 subfamily. In terms of assembly, component of the Arp2/3 complex composed of ACTR2/ARP2, ACTR3/ARP3, ARPC1B/p41-ARC, ARPC2/p34-ARC, ARPC3/p21-ARC, ARPC4/p20-ARC and ARPC5/p16-ARC. Interacts with WHDC1. Interacts weakly with MEFV. Interacts with AVIL. As to quaternary structure, (Microbial infection) Interacts with bacterium B.thailandensis BimA.

It is found in the cytoplasm. The protein localises to the cytoskeleton. The protein resides in the cell projection. Its subcellular location is the nucleus. In terms of biological role, ATP-binding component of the Arp2/3 complex, a multiprotein complex that mediates actin polymerization upon stimulation by nucleation-promoting factor (NPF). The Arp2/3 complex mediates the formation of branched actin networks in the cytoplasm, providing the force for cell motility. Seems to contact the pointed end of the daughter actin filament. In podocytes, required for the formation of lamellipodia downstream of AVIL and PLCE1 regulation. In addition to its role in the cytoplasmic cytoskeleton, the Arp2/3 complex also promotes actin polymerization in the nucleus, thereby regulating gene transcription and repair of damaged DNA. The Arp2/3 complex promotes homologous recombination (HR) repair in response to DNA damage by promoting nuclear actin polymerization, leading to drive motility of double-strand breaks (DSBs). Plays a role in ciliogenesis. The chain is Actin-related protein 3 (Actr3) from Mus musculus (Mouse).